Reading from the N-terminus, the 517-residue chain is Pseudaminic acid cytidylyltransferase and UDP-2,4-diacetamido-2,4,6-trideoxy-beta-L-altropyranose hydrolase (517 aa).

Positions methionine 1–isoleucine 208 are pseudaminic acid cytidylyltransferase. The segment at alanine 209–isoleucine 517 is UDP-2,4-diacetamido-2,4,6-trideoxy-beta-L-altropyranose hydrolase. The active-site Proton acceptor; for UDP-2,4-diacetamido-2,4,6-trideoxy-beta-L-altropyranose hydrolase activity is the histidine 244.

The protein in the N-terminal section; belongs to the CMP-NeuNAc synthase family. This sequence in the C-terminal section; belongs to the PseG family. As to quaternary structure, monomer. Mg(2+) serves as cofactor.

The catalysed reaction is UDP-2,4-diacetamido-2,4,6-trideoxy-beta-L-altrose + H2O = 2,4-diacetamido-2,4,6-trideoxy-beta-L-altrose + UDP + H(+). It carries out the reaction pseudaminate + CTP = CMP-pseudaminate + diphosphate. Catalyzes the fourth and sixth steps in the biosynthesis of pseudaminic acid, a sialic-acid-like sugar that is used to modify flagellin. The C-terminus mediates the fourth step of the pathway and catalyzes the removal of UDP from C-1 of UDP-2,4-diacetamido-2,4,6-trideoxy-beta-L-altropyranose forming 2,4-diacetamido-2,4,6-trideoxy-beta-L-altropyranose. The N-terminal part mediates the last step of the pathway by mediating activation of pseudaminic acid with CMP by forming CMP-pseudaminic acid. This Helicobacter pylori (strain ATCC 700392 / 26695) (Campylobacter pylori) protein is Pseudaminic acid cytidylyltransferase and UDP-2,4-diacetamido-2,4,6-trideoxy-beta-L-altropyranose hydrolase.